We begin with the raw amino-acid sequence, 126 residues long: UPF0344 protein ABC2900 (126 aa).

4 helical membrane-spanning segments follow: residues 16–36 (ASHE…YFLF), 43–63 (AGTI…VTGA), 66–86 (LIAY…VLLI), and 104–124 (GMLF…YGII).

This sequence belongs to the UPF0344 family.

It localises to the cell membrane. This chain is UPF0344 protein ABC2900, found in Shouchella clausii (strain KSM-K16) (Alkalihalobacillus clausii).